A 260-amino-acid polypeptide reads, in one-letter code: Thiazole synthase (260 aa).

Lysine 96 functions as the Schiff-base intermediate with DXP in the catalytic mechanism. 1-deoxy-D-xylulose 5-phosphate is bound by residues glycine 157, 184–185 (AG), and 206–207 (NT).

This sequence belongs to the ThiG family. As to quaternary structure, homotetramer. Forms heterodimers with either ThiH or ThiS.

Its subcellular location is the cytoplasm. The enzyme catalyses [ThiS sulfur-carrier protein]-C-terminal-Gly-aminoethanethioate + 2-iminoacetate + 1-deoxy-D-xylulose 5-phosphate = [ThiS sulfur-carrier protein]-C-terminal Gly-Gly + 2-[(2R,5Z)-2-carboxy-4-methylthiazol-5(2H)-ylidene]ethyl phosphate + 2 H2O + H(+). Its pathway is cofactor biosynthesis; thiamine diphosphate biosynthesis. Functionally, catalyzes the rearrangement of 1-deoxy-D-xylulose 5-phosphate (DXP) to produce the thiazole phosphate moiety of thiamine. Sulfur is provided by the thiocarboxylate moiety of the carrier protein ThiS. In vitro, sulfur can be provided by H(2)S. The chain is Thiazole synthase from Rhodopseudomonas palustris (strain HaA2).